Consider the following 969-residue polypeptide: RNA polymerase-associated protein RapA (969 aa).

In terms of domain architecture, Helicase ATP-binding spans 162–339; that stretch reads EVGQRVAPRV…FARLALLDAD (178 aa). An ATP-binding site is contributed by 175–182; sequence DEVGLGKT. Residues 285 to 288 carry the DEAH box motif; sequence DEAH. The region spanning 492-663 is the Helicase C-terminal domain; it reads RIEWLITFLK…GFLKNPQAVG (172 aa).

It belongs to the SNF2/RAD54 helicase family. RapA subfamily. In terms of assembly, interacts with the RNAP. Has a higher affinity for the core RNAP than for the holoenzyme. Its ATPase activity is stimulated by binding to RNAP.

Transcription regulator that activates transcription by stimulating RNA polymerase (RNAP) recycling in case of stress conditions such as supercoiled DNA or high salt concentrations. Probably acts by releasing the RNAP, when it is trapped or immobilized on tightly supercoiled DNA. Does not activate transcription on linear DNA. Probably not involved in DNA repair. This chain is RNA polymerase-associated protein RapA, found in Actinobacillus pleuropneumoniae serotype 5b (strain L20).